A 578-amino-acid chain; its full sequence is CTP synthase 2 (578 aa).

Positions 300 to 553 constitute a Glutamine amidotransferase type-1 domain; it reads SIALVGKYTK…MLAASGKLNT (254 aa). Active-site for GATase activity residues include cysteine 399, histidine 526, and glutamate 528.

This sequence belongs to the CTP synthase family.

The catalysed reaction is UTP + L-glutamine + ATP + H2O = CTP + L-glutamate + ADP + phosphate + 2 H(+). It functions in the pathway pyrimidine metabolism; CTP biosynthesis via de novo pathway; CTP from UDP: step 2/2. In terms of biological role, catalyzes the ATP-dependent amination of UTP to CTP with either L-glutamine or ammonia as the source of nitrogen. Constitutes the rate-limiting enzyme in the synthesis of cytosine nucleotides. The chain is CTP synthase 2 (ctps2) from Xenopus laevis (African clawed frog).